The primary structure comprises 74 residues: Antimicrobial peptide ToAp1 (74 aa).

Positions Met1–Ala22 are cleaved as a signal peptide. Lys39 is subject to Lysine amide. Residues Gly40–Tyr74 constitute a propeptide that is removed on maturation.

Belongs to the non-disulfide-bridged peptide (NDBP) superfamily. Short antimicrobial peptide (group 4) family. Expressed by the venom gland.

Its subcellular location is the secreted. Antimicrobial peptide. Is able to kill Mycobacterium abscessus subsp. massiliense in a dose-dependent manner. Has antifungal activity against Candida spp. and one Cryptococcus neoformans strains with MICs values ranging from 12.5 to 200 uM. Also shows an inhibitory activity on C.albicans biofilms at high concentrations. Shows low cytotoxic activity and has weak hemolytic activity on human erythrocytes. Shows anti-inflammatory activities, since it decreases release of pro-inflammatory cytokines, and increases release of anti-inflammatory cytokines. Acts by blocking the Toll-like receptor 4 (TLR4). In addition, decreases the expression of costimulatory molecules such as CD80 and CD86 in LPS-stimulated cells. In vivo, does not induce immune cell migration. Helical wheel projections predict an amphipathic peptide with distinct hydrophobic and hydrophilic faces. The polypeptide is Antimicrobial peptide ToAp1 (Tityus obscurus (Amazonian scorpion)).